A 547-amino-acid chain; its full sequence is Putative nitric oxide synthase (547 aa).

The segment covering 24–40 (QLAPNPSSFSPTRAAST) has biased composition (low complexity). 2 disordered regions span residues 24–57 (QLAPNPSSFSPTRAASTAPPPPEGAGPAAPSRGD) and 72–91 (VLAPEDAERRRRRREKRKAL). The span at 81 to 91 (RRRRREKRKAL) shows a compositional bias: basic residues. One can recognise a CP-type G domain in the interval 167-343 (ADQLRDKLSY…LYDTPGVHLH (177 aa)).

This sequence belongs to the TRAFAC class YlqF/YawG GTPase family. NOA1 subfamily.

The catalysed reaction is 2 L-arginine + 3 NADPH + 4 O2 + H(+) = 2 L-citrulline + 2 nitric oxide + 3 NADP(+) + 4 H2O. Produces nitric oxide (NO) which is a messenger molecule involved in hormonal signaling and defense responses in plant. The chain is Putative nitric oxide synthase from Oryza sativa subsp. japonica (Rice).